Consider the following 182-residue polypeptide: ATP-dependent protease subunit HslV (182 aa).

Residue Thr-12 is part of the active site. Na(+) contacts are provided by Ala-167, Cys-170, and Thr-173.

The protein belongs to the peptidase T1B family. HslV subfamily. In terms of assembly, a double ring-shaped homohexamer of HslV is capped on each side by a ring-shaped HslU homohexamer. The assembly of the HslU/HslV complex is dependent on binding of ATP.

The protein localises to the cytoplasm. The enzyme catalyses ATP-dependent cleavage of peptide bonds with broad specificity.. Allosterically activated by HslU binding. Functionally, protease subunit of a proteasome-like degradation complex believed to be a general protein degrading machinery. This Chlorobium phaeobacteroides (strain BS1) protein is ATP-dependent protease subunit HslV.